A 180-amino-acid polypeptide reads, in one-letter code: Regulator of G-protein signaling 8 (180 aa).

Residue serine 26 is modified to Phosphoserine. The region spanning 56–171 (SFDVLLSHKY…FLRSKMYLDL (116 aa)) is the RGS domain.

In terms of assembly, interacts with GNAO1 and GNAI3.

The protein resides in the cell membrane. The protein localises to the membrane. It localises to the perikaryon. It is found in the cell projection. Its subcellular location is the dendrite. The protein resides in the nucleus. In terms of biological role, regulates G protein-coupled receptor signaling cascades, including signaling via muscarinic acetylcholine receptor CHRM2 and dopamine receptor DRD2. Inhibits signal transduction by increasing the GTPase activity of G protein alpha subunits, thereby driving them into their inactive GDP-bound form. Modulates the activity of potassium channels that are activated in response to DRD2 and CHRM2 signaling. The protein is Regulator of G-protein signaling 8 (Rgs8) of Mus musculus (Mouse).